A 1417-amino-acid chain; its full sequence is DExH-box ATP-dependent RNA helicase DExH4, chloroplastic (1417 aa).

A compositionally biased stretch (basic residues) spans 1-12 (MAPTKKPQKNKQ). A disordered region spans residues 1–37 (MAPTKKPQKNKQSKNEIASSLIPNSGHKKPSKAPKLL). The transit peptide at 1–61 (MAPTKKPQKN…NFRRTPSPVT (61 aa)) directs the protein to the chloroplast. The 175-residue stretch at 607-781 (LQKLKEKDVL…FGQCPIITAQ (175 aa)) folds into the Helicase ATP-binding domain. 620 to 627 (GETGSGKT) contacts ATP. The DEIH box motif lies at 722–725 (DEVH). A Helicase C-terminal domain is found at 868–1043 (LLEELICHID…ELCLHIKLLG (176 aa)).

The protein belongs to the DExH box helicase family.

The protein localises to the plastid. Its subcellular location is the chloroplast. It carries out the reaction ATP + H2O = ADP + phosphate + H(+). This chain is DExH-box ATP-dependent RNA helicase DExH4, chloroplastic, found in Arabidopsis thaliana (Mouse-ear cress).